The chain runs to 35 residues: Photosystem II reaction center protein M (35 aa).

A helical membrane pass occupies residues 5 to 25 (ILAFIATALFILVPTAFLLII).

This sequence belongs to the PsbM family. In terms of assembly, PSII is composed of 1 copy each of membrane proteins PsbA, PsbB, PsbC, PsbD, PsbE, PsbF, PsbH, PsbI, PsbJ, PsbK, PsbL, PsbM, PsbT, PsbX, PsbY, PsbZ, Psb30/Ycf12, at least 3 peripheral proteins of the oxygen-evolving complex and a large number of cofactors. It forms dimeric complexes.

It localises to the plastid. The protein localises to the chloroplast thylakoid membrane. One of the components of the core complex of photosystem II (PSII). PSII is a light-driven water:plastoquinone oxidoreductase that uses light energy to abstract electrons from H(2)O, generating O(2) and a proton gradient subsequently used for ATP formation. It consists of a core antenna complex that captures photons, and an electron transfer chain that converts photonic excitation into a charge separation. This subunit is found at the monomer-monomer interface. In Panax quinquefolius (American ginseng), this protein is Photosystem II reaction center protein M.